The following is a 247-amino-acid chain: Ribonuclease PH (247 aa).

Phosphate-binding positions include Arg-87 and 125 to 127 (GTR).

Belongs to the RNase PH family. As to quaternary structure, homohexameric ring arranged as a trimer of dimers.

The enzyme catalyses tRNA(n+1) + phosphate = tRNA(n) + a ribonucleoside 5'-diphosphate. Phosphorolytic 3'-5' exoribonuclease that plays an important role in tRNA 3'-end maturation. Removes nucleotide residues following the 3'-CCA terminus of tRNAs; can also add nucleotides to the ends of RNA molecules by using nucleoside diphosphates as substrates, but this may not be physiologically important. Probably plays a role in initiation of 16S rRNA degradation (leading to ribosome degradation) during starvation. In Trichormus variabilis (strain ATCC 29413 / PCC 7937) (Anabaena variabilis), this protein is Ribonuclease PH.